The primary structure comprises 411 residues: Glutamate dehydrogenase 1 (411 aa).

The active site involves K102.

This sequence belongs to the Glu/Leu/Phe/Val dehydrogenases family.

The enzyme catalyses L-glutamate + NAD(+) + H2O = 2-oxoglutarate + NH4(+) + NADH + H(+). It carries out the reaction L-glutamate + NADP(+) + H2O = 2-oxoglutarate + NH4(+) + NADPH + H(+). This Arabidopsis thaliana (Mouse-ear cress) protein is Glutamate dehydrogenase 1 (GDH1).